The chain runs to 226 residues: Large ribosomal subunit protein uL1 (226 aa).

Belongs to the universal ribosomal protein uL1 family. In terms of assembly, part of the 50S ribosomal subunit.

Functionally, binds directly to 23S rRNA. The L1 stalk is quite mobile in the ribosome, and is involved in E site tRNA release. In terms of biological role, protein L1 is also a translational repressor protein, it controls the translation of the L11 operon by binding to its mRNA. The protein is Large ribosomal subunit protein uL1 of Mycoplasma mycoides subsp. mycoides SC (strain CCUG 32753 / NCTC 10114 / PG1).